Reading from the N-terminus, the 91-residue chain is Small ribosomal subunit protein uS19 (91 aa).

This sequence belongs to the universal ribosomal protein uS19 family.

Its function is as follows. Protein S19 forms a complex with S13 that binds strongly to the 16S ribosomal RNA. This is Small ribosomal subunit protein uS19 from Aliarcobacter butzleri (strain RM4018) (Arcobacter butzleri).